Consider the following 188-residue polypeptide: Large ribosomal subunit protein eL18 (188 aa).

Residue Lys-119 forms a Glycyl lysine isopeptide (Lys-Gly) (interchain with G-Cter in SUMO2) linkage. At Ser-130 the chain carries Phosphoserine. Residues 150 to 188 (RHFGKAPGTPHSHTKPYVRSKGRKFERARGRRASRGYKN) form a disordered region. Thr-158 carries the post-translational modification Phosphothreonine. Composition is skewed to basic residues over residues 161–171 (SHTKPYVRSKG) and 178–188 (RGRRASRGYKN). Lys-164 participates in a covalent cross-link: Glycyl lysine isopeptide (Lys-Gly) (interchain with G-Cter in SUMO2).

The protein belongs to the eukaryotic ribosomal protein eL18 family. In terms of assembly, component of the large ribosomal subunit.

The protein resides in the cytoplasm. It localises to the cytosol. The protein localises to the rough endoplasmic reticulum. Component of the large ribosomal subunit. The ribosome is a large ribonucleoprotein complex responsible for the synthesis of proteins in the cell. The protein is Large ribosomal subunit protein eL18 (Rpl18) of Rattus norvegicus (Rat).